The sequence spans 95 residues: Small integral membrane protein 18 (95 aa).

The helical transmembrane segment at 35–55 (CFVILLLFIFTVVSLVVLAFL) threads the bilayer.

The protein resides in the membrane. The chain is Small integral membrane protein 18 (SMIM18) from Homo sapiens (Human).